A 127-amino-acid polypeptide reads, in one-letter code: Aspartate 1-decarboxylase (127 aa).

The active-site Schiff-base intermediate with substrate; via pyruvic acid is the S25. S25 carries the post-translational modification Pyruvic acid (Ser). Residue T57 coordinates substrate. The Proton donor role is filled by Y58. G73–A75 serves as a coordination point for substrate.

This sequence belongs to the PanD family. In terms of assembly, heterooctamer of four alpha and four beta subunits. Requires pyruvate as cofactor. In terms of processing, is synthesized initially as an inactive proenzyme, which is activated by self-cleavage at a specific serine bond to produce a beta-subunit with a hydroxyl group at its C-terminus and an alpha-subunit with a pyruvoyl group at its N-terminus.

It is found in the cytoplasm. It catalyses the reaction L-aspartate + H(+) = beta-alanine + CO2. Its pathway is cofactor biosynthesis; (R)-pantothenate biosynthesis; beta-alanine from L-aspartate: step 1/1. Its function is as follows. Catalyzes the pyruvoyl-dependent decarboxylation of aspartate to produce beta-alanine. This chain is Aspartate 1-decarboxylase, found in Exiguobacterium sibiricum (strain DSM 17290 / CCUG 55495 / CIP 109462 / JCM 13490 / 255-15).